Here is a 98-residue protein sequence, read N- to C-terminus: DNA-binding protein Fis (98 aa).

A DNA-binding region (H-T-H motif) is located at residues 74 to 93; sequence QTRAATMLGINRGTLRKKLK.

The protein belongs to the transcriptional regulatory Fis family. In terms of assembly, homodimer.

Functionally, activates ribosomal RNA transcription. Plays a direct role in upstream activation of rRNA promoters. This Histophilus somni (strain 2336) (Haemophilus somnus) protein is DNA-binding protein Fis.